Consider the following 107-residue polypeptide: Diuretic hormone 45 (107 aa).

The propeptide occupies 1-44 (LYAMSPMAARYSAGAPWLYLLADMPRDSQRLVDPADLHEGRARP). Residue valine 91 is modified to Valine amide.

Expressed in corpora cardiaca (CC), corpora allata (CA), antennal lobe (AL) and gnathal ganglion (GNG) (at protein level). Expression in AL and GNG detected in some animals, in CC and CA in few animals (at protein level).

Its subcellular location is the secreted. Functionally, regulation of fluid secretion. This chain is Diuretic hormone 45, found in Agrotis ipsilon (Black cutworm moth).